The following is a 400-amino-acid chain: Acetate kinase (400 aa).

Asparagine 10 contacts Mg(2+). Lysine 17 serves as a coordination point for ATP. Arginine 91 is a binding site for substrate. Aspartate 150 serves as the catalytic Proton donor/acceptor. ATP is bound by residues 210-214 (HLGNG), 285-287 (DCR), and 333-337 (GIGEN). A Mg(2+)-binding site is contributed by glutamate 387.

This sequence belongs to the acetokinase family. Homodimer. Mg(2+) is required as a cofactor. Mn(2+) serves as cofactor.

It is found in the cytoplasm. It carries out the reaction acetate + ATP = acetyl phosphate + ADP. Its pathway is metabolic intermediate biosynthesis; acetyl-CoA biosynthesis; acetyl-CoA from acetate: step 1/2. In terms of biological role, catalyzes the formation of acetyl phosphate from acetate and ATP. Can also catalyze the reverse reaction. The polypeptide is Acetate kinase (Yersinia pestis bv. Antiqua (strain Antiqua)).